A 47-amino-acid chain; its full sequence is Heat shock protein HSP 90 (47 aa).

This sequence belongs to the heat shock protein 90 family. Homodimer.

The protein localises to the cytoplasm. Functionally, putative molecular chaperone that may promote the maturation, structural maintenance and proper regulation of specific target proteins. The protein is Heat shock protein HSP 90 of Oryctolagus cuniculus (Rabbit).